Consider the following 272-residue polypeptide: Type III pantothenate kinase (272 aa).

6-13 (DVRNTHTV) contacts ATP. 109–112 (GADR) serves as a coordination point for substrate. The Proton acceptor role is filled by Asp111. K(+) is bound at residue Asp131. Ser134 contributes to the ATP binding site. Thr186 serves as a coordination point for substrate.

The protein belongs to the type III pantothenate kinase family. In terms of assembly, homodimer. It depends on NH4(+) as a cofactor. Requires K(+) as cofactor.

It localises to the cytoplasm. The catalysed reaction is (R)-pantothenate + ATP = (R)-4'-phosphopantothenate + ADP + H(+). It participates in cofactor biosynthesis; coenzyme A biosynthesis; CoA from (R)-pantothenate: step 1/5. In terms of biological role, catalyzes the phosphorylation of pantothenate (Pan), the first step in CoA biosynthesis. This chain is Type III pantothenate kinase, found in Mycobacterium ulcerans (strain Agy99).